The primary structure comprises 146 residues: Large-conductance mechanosensitive channel (146 aa).

The next 3 helical transmembrane spans lie at 21–41 (VGII…ADLI), 44–64 (IIGL…LGDG), and 83–103 (GSFI…FLLV).

The protein belongs to the MscL family. As to quaternary structure, homopentamer.

It is found in the cell inner membrane. Functionally, channel that opens in response to stretch forces in the membrane lipid bilayer. May participate in the regulation of osmotic pressure changes within the cell. The protein is Large-conductance mechanosensitive channel of Cereibacter sphaeroides (strain ATCC 17029 / ATH 2.4.9) (Rhodobacter sphaeroides).